Here is a 386-residue protein sequence, read N- to C-terminus: Probable family 17 glucosidase SCW4 (386 aa).

Residues 1 to 19 (MRLSNLIASASLLSAATLA) form the signal peptide. Residues 20-30 (APANHEHKDKR) constitute a propeptide that is removed on maturation. The tract at residues 88–127 (ENNSQVSAAASPASSSAATSTQSSSSSQASSSSSSGEDVS) is disordered. Asn-89 carries N-linked (GlcNAc...) asparagine glycosylation. Glu-323 acts as the Nucleophile in catalysis.

The protein belongs to the glycosyl hydrolase 17 family. Post-translationally, N-glycosylated.

Its subcellular location is the secreted. The protein resides in the cell wall. In terms of biological role, glucanases possibly play a role in cell expansion during growth, in cell-cell fusion during mating, and in spore release during sporulation. This Saccharomyces cerevisiae (strain ATCC 204508 / S288c) (Baker's yeast) protein is Probable family 17 glucosidase SCW4 (SCW4).